The chain runs to 1296 residues: DNA-directed RNA polymerase subunit beta' (1296 aa).

The Zn(2+) site is built by Cys-60, Cys-62, Cys-75, and Cys-78. Residues Asp-535, Asp-537, and Asp-539 each coordinate Mg(2+). Zn(2+)-binding residues include Cys-877, Cys-954, Cys-961, and Cys-964.

The protein belongs to the RNA polymerase beta' chain family. As to quaternary structure, the RNAP catalytic core consists of 2 alpha, 1 beta, 1 beta' and 1 omega subunit. When a sigma factor is associated with the core the holoenzyme is formed, which can initiate transcription. It depends on Mg(2+) as a cofactor. Requires Zn(2+) as cofactor.

The enzyme catalyses RNA(n) + a ribonucleoside 5'-triphosphate = RNA(n+1) + diphosphate. Functionally, DNA-dependent RNA polymerase catalyzes the transcription of DNA into RNA using the four ribonucleoside triphosphates as substrates. In Beutenbergia cavernae (strain ATCC BAA-8 / DSM 12333 / CCUG 43141 / JCM 11478 / NBRC 16432 / NCIMB 13614 / HKI 0122), this protein is DNA-directed RNA polymerase subunit beta'.